The chain runs to 315 residues: Acetaldehyde dehydrogenase 2 (315 aa).

Residue 15–18 coordinates NAD(+); it reads SGNI. Catalysis depends on Cys-135, which acts as the Acyl-thioester intermediate. NAD(+) is bound by residues 166-174 and Asn-293; that span reads SAGPGTRAN.

It belongs to the acetaldehyde dehydrogenase family.

It carries out the reaction acetaldehyde + NAD(+) + CoA = acetyl-CoA + NADH + H(+). The sequence is that of Acetaldehyde dehydrogenase 2 from Paraburkholderia phymatum (strain DSM 17167 / CIP 108236 / LMG 21445 / STM815) (Burkholderia phymatum).